The primary structure comprises 2547 residues: MEPHVLGAGLYWLLLPCTLLAASLLRFNALSLVYLLFLLLLPWLPGPSRHSIPGHTGRLLRALLCLSLLFLVAHLAFQICLHTVPHLDQFLGQNGSLWVKVSQHIGVTRLDLKDIFNTTRLVAPDLGVLLASSLCLGLCGRLTRKAGQSRRTQELQDDDDDDDDDDEDIDAAPAVGLKGAPALATKRRLWLASRFRVTAHWLLMTSGRTLVIVLLALAGIAHPSAFSSIYLVVFLAICTWWSCHFPLSPLGFNTLCVMVSCFGAGHLICLYCYQTPFIQDMLPPGNIWARLFGLKNFVDLPNYSSPNALVLNTKHAWPIYVSPGILLLLYYTATSLLKLHKSCPSELRKETPREDEEHELELDHLEPEPQARDATQGEMPMTTEPDLDNCTVHVLTSQSPVRQRPVRPRLAELKEMSPLHGLGHLIMDQSYVCALIAMMVWSIMYHSWLTFVLLLWACLIWTVRSRHQLAMLCSPCILLYGLTLCCLRYVWAMELPELPTTLGPVSLHQLGLEHTRYPCLDLGAMLLYLLTFWLLLRQFVKEKLLKKQKVPAALLEVTVADTEPTQTQTLLRSLGELVTGIYVKYWIYVCAGMFIVVSFAGRLVVYKIVYMFLFLLCLTLFQVYYTLWRKLLRVFWWLVVAYTMLVLIAVYTFQFQDFPTYWRNLTGFTDEQLGDLGLEQFSVSELFSSILIPGFFLLACILQLHYFHRPFMQLTDLEHVPPPGTRHPRWAHRQDAVSEAPLLEHQEEEEVFREDGQSMDGPHQATQVPEGTASKWGLVADRLLDLAASFSAVLTRIQVFVRRLLELHVFKLVALYTVWVALKEVSVMNLLLVVLWAFALPYPRFRPMASCLSTVWTCIIIVCKMLYQLKIVNPHEYSSNCTEPFPNNTNLQPLEINQSLLYRGPVDPANWFGVRKGYPNLGYIQNHLQILLLLVFEAVVYRRQEHYRRQHQQAPLPAQAVCADGTRQRLDQDLLSCLKYFINFFFYKFGLEICFLMAVNVIGQRMNFMVILHGCWLVAILTRRRREAIARLWPNYCLFLTLFLLYQYLLCLGMPPALCIDYPWRWSKAIPMNSALIKWLYLPDFFRAPNSTNLISDFLLLLCASQQWQVFSAERTEEWQRMAGINTDHLEPLRGEPNPIPNFIHCRSYLDMLKVAVFRYLFWLVLVVVFVAGATRISIFGLGYLLACFYLLLFGTTLLQKDTRAQLVLWDCLILYNVTVIISKNMLSLLSCVFVEQMQSNFCWVIQLFSLVCTVKGYYDPKEMMTRDRDCLLPVEEAGIIWDSICFFFLLLQRRIFLSHYFLHVSADLKATALQASRGFALYNAANLKSINFHRQIEEKSLAQLKRQMKRIRAKQEKYRQSQASRGQLQSKDPQDPSQEPGPDSPGGSSPPRRQWWRPWLDHATVIHSGDYFLFESDSEEEEEALPEDPRPAAQSAFQMAYQAWVTNAQTVLRQRRERARQERAEQLASGGDLNPDVEPVDVPEDEMAGRSHMMQRVLSTMQFLWVLGQATVDGLTRWLRAFTKHHRTMSDVLCAERYLLTQELLRVGEVRRGVLDQLYVGEDEATLSGPVETRDGPSTASSGLGAEEPLSSMTDDTSSPLSTGYNTRSGSEEIVTDAGDLQAGTSLHGSQELLANARTRMRTASELLLDRRLHIPELEEAERFEAQQGRTLRLLRAGYQCVAAHSELLCYFIIILNHMVTASAASLVLPVLVFLWAMLTIPRPSKRFWMTAIVFTEVMVVTKYLFQFGFFPWNSYVVLRRYENKPYFPPRILGLEKTDSYIKYDLVQLMALFFHRSQLLCYGLWDHEEDRYPKDHCRSSVKDREAKEEPEAKLESQSETGTGHPKEPVLAGTPRDHIQGKGSIRSKDVIQDPPEDLKPRHTRHISIRFRRRKETPGPKGTAVMETEHEEGEGKETTERKRPRHTQEKSKFRERMKAAGRRLQSFCVSLAQSFYQPLQRFFHDILHTKYRAATDVYALMFLADIVDIIIIIFGFWAFGKHSAATDIASSLSDDQVPQAFLFMLLVQFGTMVIDRALYLRKTVLGKLAFQVVLVVAIHIWMFFILPAVTERMFSQNAVAQLWYFVKCIYFALSAYQIRCGYPTRILGNFLTKKYNHLNLFLFQGFRLVPFLVELRAVMDWVWTDTTLSLSNWMCVEDIYANIFIIKCSRETEKKYPQPKGQKKKKIVKYGMGGLIILFLIAIIWFPLLFMSLIRSVVGVVNQPIDVTVTLKLGGYEPLFTMSAQQPSIVPFTPQAYEELSQQFDPYPLAMQFISQYSPEDIVTAQIEGSSGALWRISPPSRAQMKQELYNGTADITLRFTWNFQRDLAKGGTVEYTNEKHTLELAPNSTARRQLAQLLEGRPDQSVVIPHLFPKYIRAPNGPEANPVKQLQPDEEEDYLGVRIQLRREQVGTGASGEQAGTKASDFLEWWVIELQDCKADCNLLPMVIFSDKVSPPSLGFLAGYGIVGLYVSIVLVVGKFVRGFFSEISHSIMFEELPCVDRILKLCQDIFLVRETRELELEEELYAKLIFLYRSPETMIKWTRERE.

At 1–12 the chain is on the cytoplasmic side; the sequence is MEPHVLGAGLYW. The helical transmembrane segment at 13–25 threads the bilayer; that stretch reads LLLPCTLLAASLL. At 26 to 28 the chain is on the extracellular side; the sequence is RFN. Residues 29–44 traverse the membrane as a helical segment; that stretch reads ALSLVYLLFLLLLPWL. Topologically, residues 45–58 are cytoplasmic; that stretch reads PGPSRHSIPGHTGR. A helical membrane pass occupies residues 59-81; the sequence is LLRALLCLSLLFLVAHLAFQICL. Over 82-121 the chain is Extracellular; that stretch reads HTVPHLDQFLGQNGSLWVKVSQHIGVTRLDLKDIFNTTRL. Asparagine 94 is a glycosylation site (N-linked (GlcNAc...) asparagine). Residues 122–138 traverse the membrane as a helical segment; the sequence is VAPDLGVLLASSLCLGL. Topologically, residues 139-201 are cytoplasmic; that stretch reads CGRLTRKAGQ…ASRFRVTAHW (63 aa). The chain crosses the membrane as a helical span at residues 202–221; that stretch reads LLMTSGRTLVIVLLALAGIA. Residues 222-223 are Extracellular-facing; that stretch reads HP. Residues 224-243 form a helical membrane-spanning segment; sequence SAFSSIYLVVFLAICTWWSC. Residues 244 to 254 are Cytoplasmic-facing; the sequence is HFPLSPLGFNT. The chain crosses the membrane as a helical span at residues 255–275; the sequence is LCVMVSCFGAGHLICLYCYQT. At 276–316 the chain is on the extracellular side; that stretch reads PFIQDMLPPGNIWARLFGLKNFVDLPNYSSPNALVLNTKHA. Residues 317-337 traverse the membrane as a helical segment; the sequence is WPIYVSPGILLLLYYTATSLL. Residues 338–424 are Cytoplasmic-facing; sequence KLHKSCPSEL…EMSPLHGLGH (87 aa). A disordered region spans residues 347–387; sequence LRKETPREDEEHELELDHLEPEPQARDATQGEMPMTTEPDL. A compositionally biased stretch (basic and acidic residues) spans 361–371; that stretch reads ELDHLEPEPQA. The chain crosses the membrane as a helical span at residues 425 to 445; that stretch reads LIMDQSYVCALIAMMVWSIMY. Residues 446–447 are Extracellular-facing; it reads HS. A helical membrane pass occupies residues 448 to 463; that stretch reads WLTFVLLLWACLIWTV. Topologically, residues 464–468 are cytoplasmic; it reads RSRHQ. The chain crosses the membrane as a helical span at residues 469-491; that stretch reads LAMLCSPCILLYGLTLCCLRYVW. At 492-518 the chain is on the extracellular side; the sequence is AMELPELPTTLGPVSLHQLGLEHTRYP. Residues 519–536 traverse the membrane as a helical segment; the sequence is CLDLGAMLLYLLTFWLLL. The Cytoplasmic segment spans residues 537-580; the sequence is RQFVKEKLLKKQKVPAALLEVTVADTEPTQTQTLLRSLGELVTG. Residues 581–601 traverse the membrane as a helical segment; that stretch reads IYVKYWIYVCAGMFIVVSFAG. Position 602 (arginine 602) is a topological domain, extracellular. A helical transmembrane segment spans residues 603–623; that stretch reads LVVYKIVYMFLFLLCLTLFQV. Residues 624-633 are Cytoplasmic-facing; the sequence is YYTLWRKLLR. A helical membrane pass occupies residues 634 to 655; sequence VFWWLVVAYTMLVLIAVYTFQF. Over 656–685 the chain is Extracellular; the sequence is QDFPTYWRNLTGFTDEQLGDLGLEQFSVSE. The chain crosses the membrane as a helical span at residues 686-702; sequence LFSSILIPGFFLLACIL. Topologically, residues 703 to 811 are cytoplasmic; sequence QLHYFHRPFM…RRLLELHVFK (109 aa). Serine 758 is modified (phosphoserine). Residues 812-823 form a helical membrane-spanning segment; sequence LVALYTVWVALK. The Extracellular segment spans residues 824 to 826; sequence EVS. A helical membrane pass occupies residues 827–840; that stretch reads VMNLLLVVLWAFAL. Residues 841–854 are Cytoplasmic-facing; it reads PYPRFRPMASCLST. A helical membrane pass occupies residues 855–869; sequence VWTCIIIVCKMLYQL. The Extracellular segment spans residues 870–921; sequence KIVNPHEYSSNCTEPFPNNTNLQPLEINQSLLYRGPVDPANWFGVRKGYPNL. A helical membrane pass occupies residues 922–949; sequence GYIQNHLQILLLLVFEAVVYRRQEHYRR. Over 950–989 the chain is Cytoplasmic; that stretch reads QHQQAPLPAQAVCADGTRQRLDQDLLSCLKYFINFFFYKF. Residues 990–1005 form a helical membrane-spanning segment; the sequence is GLEICFLMAVNVIGQR. Residues 1006-1007 lie on the Extracellular side of the membrane; it reads MN. A helical transmembrane segment spans residues 1008–1023; it reads FMVILHGCWLVAILTR. At 1024–1036 the chain is on the cytoplasmic side; the sequence is RRREAIARLWPNY. A helical transmembrane segment spans residues 1037–1052; that stretch reads CLFLTLFLLYQYLLCL. At 1053–1091 the chain is on the extracellular side; that stretch reads GMPPALCIDYPWRWSKAIPMNSALIKWLYLPDFFRAPNS. A helical transmembrane segment spans residues 1092–1113; that stretch reads TNLISDFLLLLCASQQWQVFSA. At 1114–1148 the chain is on the cytoplasmic side; it reads ERTEEWQRMAGINTDHLEPLRGEPNPIPNFIHCRS. The chain crosses the membrane as a helical span at residues 1149-1175; the sequence is YLDMLKVAVFRYLFWLVLVVVFVAGAT. Residues 1176-1180 lie on the Extracellular side of the membrane; the sequence is RISIF. A helical transmembrane segment spans residues 1181 to 1199; the sequence is GLGYLLACFYLLLFGTTLL. Residues 1200 to 1212 lie on the Cytoplasmic side of the membrane; it reads QKDTRAQLVLWDC. A helical transmembrane segment spans residues 1213–1231; it reads LILYNVTVIISKNMLSLLS. Topologically, residues 1232-1280 are extracellular; that stretch reads CVFVEQMQSNFCWVIQLFSLVCTVKGYYDPKEMMTRDRDCLLPVEEAGI. A helical membrane pass occupies residues 1281–1297; the sequence is IWDSICFFFLLLQRRIF. At 1298–1656 the chain is on the cytoplasmic side; the sequence is LSHYFLHVSA…ELLLDRRLHI (359 aa). A coiled-coil region spans residues 1334–1365; the sequence is HRQIEEKSLAQLKRQMKRIRAKQEKYRQSQAS. Disordered regions lie at residues 1354 to 1396, 1456 to 1480, and 1567 to 1610; these read AKQE…RRQW, RRERARQERAEQLASGGDLNPDVEP, and TLSG…NTRS. Residues 1361–1372 show a composition bias toward polar residues; sequence QSQASRGQLQSK. The segment covering 1376-1392 has biased composition (low complexity); the sequence is DPSQEPGPDSPGGSSPP. Phosphoserine is present on residues serine 1385 and serine 1390. Residues 1592-1610 show a composition bias toward polar residues; sequence SSMTDDTSSPLSTGYNTRS. 3 positions are modified to phosphoserine: serine 1627, serine 1631, and serine 1646. A helical membrane pass occupies residues 1657 to 1700; the sequence is PELEEAERFEAQQGRTLRLLRAGYQCVAAHSELLCYFIIILNHM. Residues 1701-1704 lie on the Extracellular side of the membrane; the sequence is VTAS. Residues 1705-1720 traverse the membrane as a helical segment; the sequence is AASLVLPVLVFLWAML. The Cytoplasmic portion of the chain corresponds to 1721–1728; the sequence is TIPRPSKR. The helical transmembrane segment at 1729–1747 threads the bilayer; that stretch reads FWMTAIVFTEVMVVTKYLF. Over 1748 to 1779 the chain is Extracellular; the sequence is QFGFFPWNSYVVLRRYENKPYFPPRILGLEKT. The helical transmembrane segment at 1780-1801 threads the bilayer; it reads DSYIKYDLVQLMALFFHRSQLL. Over 1802–1976 the chain is Cytoplasmic; the sequence is CYGLWDHEED…HTKYRAATDV (175 aa). Composition is skewed to basic and acidic residues over residues 1816 to 1837 and 1855 to 1880; these read DHCRSSVKDREAKEEPEAKLES and PRDHIQGKGSIRSKDVIQDPPEDLKP. Positions 1816 to 1931 are disordered; it reads DHCRSSVKDR…RPRHTQEKSK (116 aa). A compositionally biased stretch (basic residues) spans 1881–1894; it reads RHTRHISIRFRRRK. Over residues 1912–1931 the composition is skewed to basic and acidic residues; it reads GEGKETTERKRPRHTQEKSK. The chain crosses the membrane as a helical span at residues 1977–1996; that stretch reads YALMFLADIVDIIIIIFGFW. Residues 1997 to 2016 are Extracellular-facing; it reads AFGKHSAATDIASSLSDDQV. Residues 2017-2033 form a helical membrane-spanning segment; it reads PQAFLFMLLVQFGTMVI. Over 2034 to 2047 the chain is Cytoplasmic; it reads DRALYLRKTVLGKL. The chain crosses the membrane as a helical span at residues 2048–2068; sequence AFQVVLVVAIHIWMFFILPAV. Over 2069–2076 the chain is Extracellular; the sequence is TERMFSQN. The helical transmembrane segment at 2077-2092 threads the bilayer; the sequence is AVAQLWYFVKCIYFAL. Residues 2093-2192 are Cytoplasmic-facing; it reads SAYQIRCGYP…KKKIVKYGMG (100 aa). A helical transmembrane segment spans residues 2193–2213; the sequence is GLIILFLIAIIWFPLLFMSLI. The Extracellular portion of the chain corresponds to 2214–2457; sequence RSVVGVVNQP…IFSDKVSPPS (244 aa). A disulfide bridge links cysteine 2437 with cysteine 2441. Residues 2458–2478 form a helical membrane-spanning segment; sequence LGFLAGYGIVGLYVSIVLVVG. The Cytoplasmic segment spans residues 2479–2547; the sequence is KFVRGFFSEI…TMIKWTRERE (69 aa).

Belongs to the PIEZO (TC 1.A.75) family. As to quaternary structure, homotrimer; the homotrimer forms a propeller-shaped Piezo channel with a cation-ion conducting pore. Heterotrimeric interaction may occur between PIEZO1 and PIEZO2. Interacts with PKD2. Interacts with STOMl3. Interacts with TMC1, TMC2, PCDG15 and CIB2; the interaction may be part of the MET complex. Interacts with MDFIC (via C-terminus); the interaction prolongs Piezo channel inactivation. Interacts with MDFI (via C-terminus); the interaction prolongs Piezo channel inactivation. As to expression, expressed in bladder, colon, kidney and skin. Also expressed in bone marrow, liver, lung, spleen and erythrocytes (at protein level). Expressed in myoblasts (at protein level). Expressed in red blood cells. Expressed in cochlear inner and outer hair cells (IHCs and OHCs) and vestibular organ HCs.

The protein localises to the endoplasmic reticulum membrane. The protein resides in the endoplasmic reticulum-Golgi intermediate compartment membrane. Its subcellular location is the cell membrane. It localises to the cell projection. It is found in the lamellipodium membrane. It carries out the reaction K(+)(in) = K(+)(out). It catalyses the reaction Na(+)(in) = Na(+)(out). The enzyme catalyses Ca(2+)(in) = Ca(2+)(out). The catalysed reaction is Mg(2+)(in) = Mg(2+)(out). With respect to regulation, regulated by auxillary subunits MDFIC and MDFI. Down-regulated by phosphatidylserines exposed on the cell surface. Divalent ions decrease the single-channel permeability of K(+). Pore-forming subunit of the mechanosensitive non-specific cation Piezo channel required for rapidly adapting mechanically activated (MA) currents and has a key role in sensing touch and tactile pain. Piezo channels are homotrimeric three-blade propeller-shaped structures that utilize a cap-motion and plug-and-latch mechanism to gate their ion-conducting pathways. Generates currents characterized by a linear current-voltage relationship that are sensitive to ruthenium red and gadolinium. Conductance to monovalent alkali ions is highest for K(+), intermediate for Na(+) and lowest for Li(+). Divalent ions except for Mn(2+) permeate the channel but more slowly than the monovalent ions and they also reduce K(+) currents. Plays a key role in epithelial cell adhesion by maintaining integrin activation through R-Ras recruitment to the ER, most probably in its activated state, and subsequent stimulation of calpain signaling. In inner ear hair cells, PIEZO1/2 subunits may constitute part of the mechanotransducer (MET) non-selective cation channel complex where they may act as pore-forming ion-conducting component in the complex. In the kidney, may contribute to the detection of intraluminal pressure changes and to urine flow sensing. Acts as a shear-stress sensor that promotes endothelial cell organization and alignment in the direction of blood flow through calpain activation. Plays a key role in blood vessel formation and vascular structure in both development and adult physiology. Acts as a sensor of phosphatidylserine (PS) flipping at the plasma membrane and governs morphogenesis of muscle cells. In myoblasts, flippase-mediated PS enrichment at the inner leaflet of plasma membrane triggers channel activation and Ca(2+) influx followed by Rho GTPases signal transduction, leading to assembly of cortical actomyosin fibers and myotube formation. The polypeptide is Piezo-type mechanosensitive ion channel component 1 (Mus musculus (Mouse)).